The primary structure comprises 300 residues: Ribokinase (300 aa).

Substrate-binding positions include S11 to D13, G39 to N43, and E139. Residues N183 and T210–G215 contribute to the ATP site. K(+)-binding residues include D236 and T238. G241 to D242 is an ATP binding site. D242 lines the substrate pocket. The Proton acceptor role is filled by D242. Residues S272, K275, and G277 each coordinate K(+).

Belongs to the carbohydrate kinase PfkB family. Ribokinase subfamily. As to quaternary structure, homodimer. Requires Mg(2+) as cofactor.

Its subcellular location is the cytoplasm. It catalyses the reaction D-ribose + ATP = D-ribose 5-phosphate + ADP + H(+). The protein operates within carbohydrate metabolism; D-ribose degradation; D-ribose 5-phosphate from beta-D-ribopyranose: step 2/2. Activated by a monovalent cation that binds near, but not in, the active site. The most likely occupant of the site in vivo is potassium. Ion binding induces a conformational change that may alter substrate affinity. In terms of biological role, catalyzes the phosphorylation of ribose at O-5 in a reaction requiring ATP and magnesium. The resulting D-ribose-5-phosphate can then be used either for sythesis of nucleotides, histidine, and tryptophan, or as a component of the pentose phosphate pathway. This is Ribokinase from Lactococcus lactis subsp. lactis (strain IL1403) (Streptococcus lactis).